A 228-amino-acid chain; its full sequence is Indole-3-glycerol phosphate synthase (228 aa).

The protein belongs to the TrpC family.

It carries out the reaction 1-(2-carboxyphenylamino)-1-deoxy-D-ribulose 5-phosphate + H(+) = (1S,2R)-1-C-(indol-3-yl)glycerol 3-phosphate + CO2 + H2O. The protein operates within amino-acid biosynthesis; L-tryptophan biosynthesis; L-tryptophan from chorismate: step 4/5. This is Indole-3-glycerol phosphate synthase from Pyrococcus furiosus (strain ATCC 43587 / DSM 3638 / JCM 8422 / Vc1).